The chain runs to 249 residues: Pleckstrin homology domain-containing family F member 2 (249 aa).

Ser-16 is modified (phosphoserine). The 97-residue stretch at 35 to 131 folds into the PH domain; it reads VLIGEGVLTK…WMNHINKCVT (97 aa). N6-acetyllysine is present on Lys-44. Residues 152–212 form an FYVE-type zinc finger; the sequence is DSEATVCMRC…ICDFCYDLLS (61 aa). 8 residues coordinate Zn(2+): Cys-158, Cys-161, Cys-175, Cys-178, Cys-183, Cys-186, Cys-204, and Cys-207. Positions 221-233 are enriched in polar residues; that stretch reads PTRSDSYSQSLKS. The segment at 221–249 is disordered; the sequence is PTRSDSYSQSLKSPLNDASDDDDDDDSSD. The span at 238 to 249 shows a compositional bias: acidic residues; the sequence is ASDDDDDDDSSD. 2 positions are modified to phosphoserine: Ser-239 and Ser-248.

As to quaternary structure, may interact with EEA1. As to expression, expressed in brain, stomach and thymus, as well as in kidney, spleen, and skeletal muscle. Also expressed in peripheral blood mononuclear cells and dendritic cells.

It is found in the early endosome membrane. The protein resides in the endoplasmic reticulum. In terms of biological role, may play a role in early endosome fusion upstream of RAB5, hence regulating receptor trafficking and fluid-phase transport. Enhances cellular sensitivity to TNF-induced apoptosis. The polypeptide is Pleckstrin homology domain-containing family F member 2 (Plekhf2) (Mus musculus (Mouse)).